The chain runs to 237 residues: LexA repressor (237 aa).

Positions 26–46 (FDEMKEALDLRSKSGIHRLIT) form a DNA-binding region, H-T-H motif. The tract at residues 84-110 (GFSPSVIEGGAQPKPSSRDLAPARSSG) is disordered. Catalysis depends on for autocatalytic cleavage activity residues S158 and K196.

Belongs to the peptidase S24 family. Homodimer.

The catalysed reaction is Hydrolysis of Ala-|-Gly bond in repressor LexA.. Represses a number of genes involved in the response to DNA damage (SOS response), including recA and lexA. In the presence of single-stranded DNA, RecA interacts with LexA causing an autocatalytic cleavage which disrupts the DNA-binding part of LexA, leading to derepression of the SOS regulon and eventually DNA repair. The sequence is that of LexA repressor from Parvibaculum lavamentivorans (strain DS-1 / DSM 13023 / NCIMB 13966).